The primary structure comprises 127 residues: Small ribosomal subunit protein uS12 (127 aa).

Position 89 is a 3-methylthioaspartic acid (D89). The segment at 102–127 (LDTAGVKDRKQGRSKYGTKRPKEAKK) is disordered. Over residues 113-127 (GRSKYGTKRPKEAKK) the composition is skewed to basic residues.

This sequence belongs to the universal ribosomal protein uS12 family. As to quaternary structure, part of the 30S ribosomal subunit. Contacts proteins S8 and S17. May interact with IF1 in the 30S initiation complex.

With S4 and S5 plays an important role in translational accuracy. In terms of biological role, interacts with and stabilizes bases of the 16S rRNA that are involved in tRNA selection in the A site and with the mRNA backbone. Located at the interface of the 30S and 50S subunits, it traverses the body of the 30S subunit contacting proteins on the other side and probably holding the rRNA structure together. The combined cluster of proteins S8, S12 and S17 appears to hold together the shoulder and platform of the 30S subunit. This Nostoc punctiforme (strain ATCC 29133 / PCC 73102) protein is Small ribosomal subunit protein uS12.